The primary structure comprises 580 residues: 2-succinyl-5-enolpyruvyl-6-hydroxy-3-cyclohexene-1-carboxylate synthase (580 aa).

Residues 178–199 (LEPTPMPGDLTEPPAAAQPRDD) are disordered.

Belongs to the TPP enzyme family. MenD subfamily. In terms of assembly, homodimer. Mg(2+) serves as cofactor. Mn(2+) is required as a cofactor. Requires thiamine diphosphate as cofactor.

It carries out the reaction isochorismate + 2-oxoglutarate + H(+) = 5-enolpyruvoyl-6-hydroxy-2-succinyl-cyclohex-3-ene-1-carboxylate + CO2. Its pathway is quinol/quinone metabolism; 1,4-dihydroxy-2-naphthoate biosynthesis; 1,4-dihydroxy-2-naphthoate from chorismate: step 2/7. The protein operates within quinol/quinone metabolism; menaquinone biosynthesis. In terms of biological role, catalyzes the thiamine diphosphate-dependent decarboxylation of 2-oxoglutarate and the subsequent addition of the resulting succinic semialdehyde-thiamine pyrophosphate anion to isochorismate to yield 2-succinyl-5-enolpyruvyl-6-hydroxy-3-cyclohexene-1-carboxylate (SEPHCHC). In Roseiflexus castenholzii (strain DSM 13941 / HLO8), this protein is 2-succinyl-5-enolpyruvyl-6-hydroxy-3-cyclohexene-1-carboxylate synthase.